Here is a 460-residue protein sequence, read N- to C-terminus: UDP-N-acetylmuramoylalanine--D-glutamate ligase (460 aa).

Residue 115–121 (GTDGKTT) coordinates ATP.

The protein belongs to the MurCDEF family.

Its subcellular location is the cytoplasm. It carries out the reaction UDP-N-acetyl-alpha-D-muramoyl-L-alanine + D-glutamate + ATP = UDP-N-acetyl-alpha-D-muramoyl-L-alanyl-D-glutamate + ADP + phosphate + H(+). Its pathway is cell wall biogenesis; peptidoglycan biosynthesis. Its function is as follows. Cell wall formation. Catalyzes the addition of glutamate to the nucleotide precursor UDP-N-acetylmuramoyl-L-alanine (UMA). The sequence is that of UDP-N-acetylmuramoylalanine--D-glutamate ligase from Chlorobium luteolum (strain DSM 273 / BCRC 81028 / 2530) (Pelodictyon luteolum).